A 240-amino-acid chain; its full sequence is ATP-dependent dethiobiotin synthetase BioD (240 aa).

15-20 (EIGKTF) provides a ligand contact to ATP. Thr-19 lines the Mg(2+) pocket. Lys-40 is a catalytic residue. ATP contacts are provided by residues Asp-57, 118-121 (EGVG), and 178-179 (NR). 2 residues coordinate Mg(2+): Asp-57 and Glu-118.

Belongs to the dethiobiotin synthetase family. In terms of assembly, homodimer. The cofactor is Mg(2+).

Its subcellular location is the cytoplasm. It carries out the reaction (7R,8S)-7,8-diammoniononanoate + CO2 + ATP = (4R,5S)-dethiobiotin + ADP + phosphate + 3 H(+). Its pathway is cofactor biosynthesis; biotin biosynthesis; biotin from 7,8-diaminononanoate: step 1/2. Its function is as follows. Catalyzes a mechanistically unusual reaction, the ATP-dependent insertion of CO2 between the N7 and N8 nitrogen atoms of 7,8-diaminopelargonic acid (DAPA, also called 7,8-diammoniononanoate) to form a ureido ring. This Burkholderia thailandensis (strain ATCC 700388 / DSM 13276 / CCUG 48851 / CIP 106301 / E264) protein is ATP-dependent dethiobiotin synthetase BioD.